The primary structure comprises 65 residues: SCOCO-like protein 1 (65 aa).

A coiled-coil region spans residues 8–44 (RSLMEQKAMELQQQLQALLDEIDQNKQESENISRESE).

Belongs to the SLO1 family.

In Schizosaccharomyces pombe (strain 972 / ATCC 24843) (Fission yeast), this protein is SCOCO-like protein 1.